We begin with the raw amino-acid sequence, 350 residues long: Cytosolic Fe-S cluster assembly factor NBP35 (350 aa).

Residues 1-30 (MENGDIPEDANEHCPGPQSESAGKSDSCAG) form a disordered region. Positions 14, 28, 31, and 37 each coordinate [4Fe-4S] cluster. 67 to 74 (GKGGVGKS) lines the ATP pocket.

Belongs to the Mrp/NBP35 ATP-binding proteins family. NUBP1/NBP35 subfamily. In terms of assembly, homodimer and homotetramer. Predominantly homodimeric. [4Fe-4S] cluster serves as cofactor.

The protein localises to the cytoplasm. Component of the cytosolic iron-sulfur (Fe-S) protein assembly (CIA) machinery. Required for maturation of extramitochondrial Fe-S proteins. Functions as a Fe-S scaffold, mediating the de novo assembly of an Fe-S cluster and its transfer to target apoproteins. Essential for embryo development. This chain is Cytosolic Fe-S cluster assembly factor NBP35, found in Arabidopsis thaliana (Mouse-ear cress).